Reading from the N-terminus, the 213-residue chain is CASP-like protein UU2 (213 aa).

The interval 1 to 26 (MEDPKGAWQSDVFDNGRDFKPHDKAP) is disordered. Topologically, residues 1-53 (MEDPKGAWQSDVFDNGRDFKPHDKAPANVTAGTTPPMYNVGAGGSEGNSKALS) are cytoplasmic. Positions 14–25 (DNGRDFKPHDKA) are enriched in basic and acidic residues. A helical transmembrane segment spans residues 54-74 (IISIVLRCLSIMFNVVSLGVI). The Extracellular portion of the chain corresponds to 75–96 (ASNQGKSYFVVWRTLNSSNMQY). N90 carries N-linked (GlcNAc...) asparagine glycosylation. A helical membrane pass occupies residues 97-117 (LFAINVIVLVYCVVQLILSII). The Cytoplasmic portion of the chain corresponds to 118–137 (NLVQGKMVLSGPTQPASTIT). Residues 138–158 (YICDQGLTYMLMAGFGAGVAL) traverse the membrane as a helical segment. At 159–184 (QASVDKGESGMLDCSGANEFCGKNKA) the chain is on the extracellular side. Residues 185–205 (SAALSFLGFVCIALSANLNYL) traverse the membrane as a helical segment. Over 206–213 (RLYFMAAK) the chain is Cytoplasmic.

It belongs to the Casparian strip membrane proteins (CASP) family. As to quaternary structure, homodimer and heterodimers.

It localises to the cell membrane. This Physcomitrium patens (Spreading-leaved earth moss) protein is CASP-like protein UU2.